We begin with the raw amino-acid sequence, 332 residues long: Cytochrome c1, heme protein, mitochondrial (332 aa).

The N-terminal 70 residues, 1-70 (MLARTCLRST…YYHLYGFASA (70 aa)), are a transit peptide targeting the mitochondrion. At 71 to 277 (MTPAEEGLHA…AEPEMDDRKR (207 aa)) the chain is on the mitochondrial intermembrane side. The 154-residue stretch at 97–250 (QALRRGFQVY…GLVDYEDGTP (154 aa)) folds into the Cytochrome c domain. Heme c-binding residues include C110, C113, and H114. Acidic residues predominate over residues 139–151 (EENEYDTEPNDQG). The disordered stretch occupies residues 139-162 (EENEYDTEPNDQGEIEKRPGKLSD). M234 serves as a coordination point for heme c. The chain crosses the membrane as a helical span at residues 278–296 (MGMKVLVVTSVLFALSVYV). The Mitochondrial matrix segment spans residues 297-332 (KRYKWAWLKSRKIVYDPPKSPPPATNLALPQQRAKS).

It belongs to the cytochrome c family. As to quaternary structure, component of the ubiquinol-cytochrome c oxidoreductase (cytochrome b-c1 complex, complex III, CIII), a multisubunit enzyme composed of 10 subunits. The complex is composed of 3 respiratory subunits cytochrome b (cob), cytochrome c1 (cyt-1) and Rieske protein (fes-1), 2 core protein subunits pep and ucr-1, and 5 low-molecular weight protein subunits qcr6, qcr7, qcr8, qcr9 and probably NCU16844/qcr10. The complex exists as an obligatory dimer and forms supercomplexes (SCs) in the inner mitochondrial membrane with NADH-ubiquinone oxidoreductase (complex I, CI) and cytochrome c oxidase (complex IV, CIV), resulting in different assemblies (supercomplexes SCI(1)III(2), SCIII(2)IV(1) and SCIII(2)IV(2) as well as higher order I(x)III(y)IV(z) megacomplexes). The cofactor is heme c.

Its subcellular location is the mitochondrion inner membrane. It catalyses the reaction a quinol + 2 Fe(III)-[cytochrome c](out) = a quinone + 2 Fe(II)-[cytochrome c](out) + 2 H(+)(out). Functionally, component of the ubiquinol-cytochrome c oxidoreductase, a multisubunit transmembrane complex that is part of the mitochondrial electron transport chain which drives oxidative phosphorylation. The respiratory chain contains 3 multisubunit complexes succinate dehydrogenase (complex II, CII), ubiquinol-cytochrome c oxidoreductase (cytochrome b-c1 complex, complex III, CIII) and cytochrome c oxidase (complex IV, CIV), that cooperate to transfer electrons derived from NADH and succinate to molecular oxygen, creating an electrochemical gradient over the inner membrane that drives transmembrane transport and the ATP synthase. The cytochrome b-c1 complex catalyzes electron transfer from ubiquinol to cytochrome c, linking this redox reaction to translocation of protons across the mitochondrial inner membrane, with protons being carried across the membrane as hydrogens on the quinol. In the process called Q cycle, 2 protons are consumed from the matrix, 4 protons are released into the intermembrane space and 2 electrons are passed to cytochrome c. Cytochrome c1 is a catalytic core subunit containing a c-type heme. It transfers electrons from the [2Fe-2S] iron-sulfur cluster of the Rieske protein to cytochrome c. The protein is Cytochrome c1, heme protein, mitochondrial (cyt-1) of Neurospora crassa (strain ATCC 24698 / 74-OR23-1A / CBS 708.71 / DSM 1257 / FGSC 987).